Consider the following 93-residue polypeptide: Beta-defensin 128 (93 aa).

The N-terminal stretch at 1–18 is a signal peptide; that stretch reads MKLFLVLIILLFEVLTDG. 3 cysteine pairs are disulfide-bonded: Cys-24-Cys-52, Cys-32-Cys-46, and Cys-36-Cys-53.

It belongs to the beta-defensin family.

Its subcellular location is the secreted. Has antibacterial activity. The sequence is that of Beta-defensin 128 (DEFB128) from Homo sapiens (Human).